The following is a 520-amino-acid chain: MPFSNETEMSQCSNAKRRVNDPLTGPKNCSTSSTDSGVILNDNVAAFRPEKETKDRGTGEGQFQSKSEEKTESKRISVEHTVNITTENVGKTSSPAVSIRSTTISVVSIDDNAIDSSSIDSDSEAEAEDYTVQKLGHQVTYPPNSSHLRDLNQGLTVISRHVAPGEAAVPPPNPLEAGIVAKQILNGNLAVATPTSPAGGATQGIGSIALTNSTDVTFGDKHFYEGPVTIQQFLIDNRDKWKPGEGPAGGQDNPAFNGGPSTNGSAPGSKHEDPAQTPPICPFLPNTVGRKAVTVTVVFVTLTFLLGIVLATTTNLFGKTLNQSKIRDDDDYRQNIPINSTIDLDNIGGGLILRFVERQQWLAQPPQKEIPDLELPVGLVIALPTNSENCSTQAICVLRVRLLQTYDIESSQKCDIAYNFLIGGDGNVYVGRGWNKMGAHMNNINYDSQSLSFAYIGSFKTIQPSAKQLSVTRLLLERGVKLGKIAPSYRFTASSKLMPSVTDFKADALYASFANWTHWS.

2 stretches are compositionally biased toward polar residues: residues 1 to 14 (MPFS…QCSN) and 27 to 36 (KNCSTSSTDS). Disordered regions lie at residues 1-78 (MPFS…RISV) and 239-278 (DKWK…AQTP). Residues 1–291 (MPFSNETEMS…PFLPNTVGRK (291 aa)) are Cytoplasmic-facing. Basic and acidic residues-rich tracts occupy residues 48–58 (RPEKETKDRGT) and 66–78 (KSEE…RISV). A helical; Signal-anchor for type II membrane protein membrane pass occupies residues 292–312 (AVTVTVVFVTLTFLLGIVLAT). Residues 313 to 520 (TTNLFGKTLN…ASFANWTHWS (208 aa)) are Extracellular-facing. An N-linked (GlcNAc...) asparagine glycan is attached at N389. C390 and C396 form a disulfide bridge. Residues 412–490 (QKCDIAYNFL…KLGKIAPSYR (79 aa)) enclose the N-acetylmuramoyl-L-alanine amidase domain. N515 is a glycosylation site (N-linked (GlcNAc...) asparagine).

The protein belongs to the N-acetylmuramoyl-L-alanine amidase 2 family. In terms of processing, proteolytically cleaved, probably by a metaloprotease such as Mmp2; proteolytic cleavage leads to activation of the imd/Relish signaling pathway. Expressed in the fat body and hemocytes.

The protein localises to the membrane. Activated by proteolytic cleavage in response to Gram-negative bacterial infection; cleavage may be mediated by endogenous proteases, such as the metalloprotease Mmp2 or elastase, or by bacterially expressed proteases such as the surface serine protease OmpT. Its function is as follows. Major activator of the imd/Relish pathway and is likely to encode a pattern recognition molecule for the humoral immune response. Required for Relish processing and nuclear translocation following proteolytic cleavage. Involved in the response to lipopolysaccharide (LPS) and peptidoglycan of Gram-negative bacteria. The different isoforms probably display different recognition capabilities to various microbial patterns. In terms of biological role, mediates the response to LPS and Gram-negative bacteria. Functionally, mediates the response to LPS, peptidoglycan and Gram-negative bacteria. The polypeptide is Peptidoglycan-recognition protein LC (PGRP-LC) (Drosophila melanogaster (Fruit fly)).